Here is a 326-residue protein sequence, read N- to C-terminus: Tetraacyldisaccharide 4'-kinase (326 aa).

55 to 62 (TAGGNGKT) is a binding site for ATP.

Belongs to the LpxK family.

The enzyme catalyses a lipid A disaccharide + ATP = a lipid IVA + ADP + H(+). It participates in glycolipid biosynthesis; lipid IV(A) biosynthesis; lipid IV(A) from (3R)-3-hydroxytetradecanoyl-[acyl-carrier-protein] and UDP-N-acetyl-alpha-D-glucosamine: step 6/6. In terms of biological role, transfers the gamma-phosphate of ATP to the 4'-position of a tetraacyldisaccharide 1-phosphate intermediate (termed DS-1-P) to form tetraacyldisaccharide 1,4'-bis-phosphate (lipid IVA). This Erwinia tasmaniensis (strain DSM 17950 / CFBP 7177 / CIP 109463 / NCPPB 4357 / Et1/99) protein is Tetraacyldisaccharide 4'-kinase.